Consider the following 425-residue polypeptide: Stabilizer of axonemal microtubules 4 (425 aa).

Disordered stretches follow at residues proline 93–lysine 126, glutamate 203–leucine 225, and lysine 316–proline 335. The segment covering phenylalanine 207–serine 222 has biased composition (polar residues).

Microtubule inner protein component of sperm flagellar doublet microtubules. Interacts with PPP1CA.

It localises to the cell projection. The protein localises to the cilium. It is found in the cytoplasm. The protein resides in the cytoskeleton. Its subcellular location is the flagellum axoneme. This is Stabilizer of axonemal microtubules 4 from Homo sapiens (Human).